Reading from the N-terminus, the 590-residue chain is Arginine--tRNA ligase (590 aa).

Positions 130 to 140 (PNIAKEMHVGH) match the 'HIGH' region motif.

It belongs to the class-I aminoacyl-tRNA synthetase family. As to quaternary structure, monomer.

The protein localises to the cytoplasm. It carries out the reaction tRNA(Arg) + L-arginine + ATP = L-arginyl-tRNA(Arg) + AMP + diphosphate. This Synechococcus sp. (strain CC9311) protein is Arginine--tRNA ligase.